The primary structure comprises 412 residues: Putative competence-damage inducible protein (412 aa).

The protein belongs to the CinA family.

The sequence is that of Putative competence-damage inducible protein from Bacillus cereus (strain ZK / E33L).